A 781-amino-acid chain; its full sequence is Lon protease (781 aa).

In terms of domain architecture, Lon N-terminal spans A16 to R214. G365–T372 is an ATP binding site. Residues E601–K781 enclose the Lon proteolytic domain. Residues S688 and K731 contribute to the active site.

The protein belongs to the peptidase S16 family. In terms of assembly, homohexamer. Organized in a ring with a central cavity.

The protein localises to the cytoplasm. The enzyme catalyses Hydrolysis of proteins in presence of ATP.. Its function is as follows. ATP-dependent serine protease that mediates the selective degradation of mutant and abnormal proteins as well as certain short-lived regulatory proteins. Required for cellular homeostasis and for survival from DNA damage and developmental changes induced by stress. Degrades polypeptides processively to yield small peptide fragments that are 5 to 10 amino acids long. Binds to DNA in a double-stranded, site-specific manner. In Malacoplasma penetrans (strain HF-2) (Mycoplasma penetrans), this protein is Lon protease.